A 232-amino-acid chain; its full sequence is MSNYKEIAWQGLWKNNPGLVQLLGLCPLLAVTATLTNALGLGLATVAVLIGSNVLVSLVREFVPKEIRIPVFVMIIAALVTVVQLVINAYAYGLYLSLGIFLPLIVTNCVIIGRAEAFASRNSVGAAAFDGLMMGTGFTAVLAVLGAVREILGQGTLFDGADQLLGDWAASLRIELWHVDNSFLLAMLPPGAFIAMGLLIAGKNVIDKRLEAKKPTPEAAPAITRARITKVG.

6 helical membrane passes run 18-38 (GLVQLLGLCPLLAVTATLTNA), 39-59 (LGLGLATVAVLIGSNVLVSLV), 69-89 (IPVFVMIIAALVTVVQLVINA), 93-113 (GLYLSLGIFLPLIVTNCVIIG), 128-148 (AFDGLMMGTGFTAVLAVLGAV), and 182-202 (SFLLAMLPPGAFIAMGLLIAG).

The protein belongs to the NqrDE/RnfAE family. As to quaternary structure, the complex is composed of six subunits: RnfA, RnfB, RnfC, RnfD, RnfE and RnfG.

The protein resides in the cell inner membrane. Part of a membrane-bound complex that couples electron transfer with translocation of ions across the membrane. In Shewanella amazonensis (strain ATCC BAA-1098 / SB2B), this protein is Ion-translocating oxidoreductase complex subunit E.